Consider the following 136-residue polypeptide: Autophagy-related protein 41 (136 aa).

An ATG9-binding region spans residues 127–136 (QNYRLWLSSV).

In terms of assembly, interacts with ATG9.

It is found in the preautophagosomal structure membrane. Functionally, involved in both selective and non-selective autophagy. Does not appear to play a role in determining the size of autophagosomes, but rather influences their formation rate. With ATG9, plays a role in the delivery of donor membrane to expanding phagophore. The sequence is that of Autophagy-related protein 41 from Saccharomyces cerevisiae (strain ATCC 204508 / S288c) (Baker's yeast).